The sequence spans 264 residues: 5'-nucleotidase SurE (264 aa).

4 residues coordinate a divalent metal cation: Asp10, Asp11, Ser43, and Asn97.

Belongs to the SurE nucleotidase family. A divalent metal cation is required as a cofactor.

Its subcellular location is the cytoplasm. It catalyses the reaction a ribonucleoside 5'-phosphate + H2O = a ribonucleoside + phosphate. Nucleotidase that shows phosphatase activity on nucleoside 5'-monophosphates. This Sulfurimonas denitrificans (strain ATCC 33889 / DSM 1251) (Thiomicrospira denitrificans (strain ATCC 33889 / DSM 1251)) protein is 5'-nucleotidase SurE.